Consider the following 700-residue polypeptide: Putative cysteine-rich receptor-like protein kinase 30 (700 aa).

An N-terminal signal peptide occupies residues 1–24 (MRQNNLFSLIFWLVPVSLIIVVSA). Gnk2-homologous domains are found at residues 25–129 (QLCS…NQPS) and 135–250 (LESV…LYPF). Residues 25–285 (QLCSEKFGTF…KDEKTIHTGT (261 aa)) lie on the Extracellular side of the membrane. 5 N-linked (GlcNAc...) asparagine glycosylation sites follow: Asn63, Asn105, Asn146, Asn150, and Asn191. The chain crosses the membrane as a helical span at residues 286 to 306 (IIGIVIVVAMVIIMALLALGV). The Cytoplasmic segment spans residues 307–700 (SVCRSRKKYQ…SKSMYRNTED (394 aa)). The region spanning 346–626 (FLASNKIGQG…IFQMLTNSSI (281 aa)) is the Protein kinase domain. ATP is bound by residues 352 to 360 (IGQGGFGEV) and Lys374. Catalysis depends on Asp474, which acts as the Proton acceptor. At Ser478 the chain carries Phosphoserine. Thr514 bears the Phosphothreonine mark. Tyr522 is modified (phosphotyrosine).

Belongs to the protein kinase superfamily. Ser/Thr protein kinase family. CRK subfamily.

The protein localises to the membrane. The enzyme catalyses L-seryl-[protein] + ATP = O-phospho-L-seryl-[protein] + ADP + H(+). It carries out the reaction L-threonyl-[protein] + ATP = O-phospho-L-threonyl-[protein] + ADP + H(+). The polypeptide is Putative cysteine-rich receptor-like protein kinase 30 (CRK30) (Arabidopsis thaliana (Mouse-ear cress)).